A 420-amino-acid chain; its full sequence is Glutamyl-tRNA reductase (420 aa).

Substrate contacts are provided by residues 49-52, Ser109, 114-116, and Gln120; these read TCNR and EPQ. The active-site Nucleophile is the Cys50. An NADP(+)-binding site is contributed by 189-194; that stretch reads GAGETI.

It belongs to the glutamyl-tRNA reductase family. In terms of assembly, homodimer.

It carries out the reaction (S)-4-amino-5-oxopentanoate + tRNA(Glu) + NADP(+) = L-glutamyl-tRNA(Glu) + NADPH + H(+). It functions in the pathway porphyrin-containing compound metabolism; protoporphyrin-IX biosynthesis; 5-aminolevulinate from L-glutamyl-tRNA(Glu): step 1/2. In terms of biological role, catalyzes the NADPH-dependent reduction of glutamyl-tRNA(Glu) to glutamate 1-semialdehyde (GSA). The chain is Glutamyl-tRNA reductase from Yersinia pseudotuberculosis serotype O:1b (strain IP 31758).